A 341-amino-acid polypeptide reads, in one-letter code: ATP-dependent 6-phosphofructokinase 2 (341 aa).

Residues glycine 10, 72–73, and 102–105 each bind ATP; these read RL and GEGT. Residue glutamate 103 coordinates Mg(2+). Substrate-binding positions include 125 to 127, arginine 162, 169 to 171, glutamate 222, lysine 266, and 272 to 275; these read TID, MGR, and HVQR. Aspartate 127 (proton acceptor) is an active-site residue.

This sequence belongs to the phosphofructokinase type A (PFKA) family. Mixed-substrate PFK group III subfamily. As to quaternary structure, homodimer or homotetramer. Requires Mg(2+) as cofactor.

The protein localises to the cytoplasm. The enzyme catalyses beta-D-fructose 6-phosphate + ATP = beta-D-fructose 1,6-bisphosphate + ADP + H(+). It functions in the pathway carbohydrate degradation; glycolysis; D-glyceraldehyde 3-phosphate and glycerone phosphate from D-glucose: step 3/4. With respect to regulation, allosterically inhibited by phosphoenolpyruvate. Functionally, catalyzes the phosphorylation of D-fructose 6-phosphate to fructose 1,6-bisphosphate by ATP, the first committing step of glycolysis. The sequence is that of ATP-dependent 6-phosphofructokinase 2 from Streptomyces coelicolor (strain ATCC BAA-471 / A3(2) / M145).